Here is an 89-residue protein sequence, read N- to C-terminus: Small ribosomal subunit protein uS17 (89 aa).

The protein belongs to the universal ribosomal protein uS17 family. In terms of assembly, part of the 30S ribosomal subunit.

In terms of biological role, one of the primary rRNA binding proteins, it binds specifically to the 5'-end of 16S ribosomal RNA. This chain is Small ribosomal subunit protein uS17, found in Coxiella burnetii (strain RSA 493 / Nine Mile phase I).